Consider the following 568-residue polypeptide: Urease subunit alpha (568 aa).

A Urease domain is found at 131-568; that stretch reads GGMDAHIHFI…LPLAQRYFLY (438 aa). Residues histidine 136, histidine 138, and lysine 219 each coordinate Ni(2+). Position 219 is an N6-carboxylysine (lysine 219). Position 221 (histidine 221) interacts with substrate. Ni(2+)-binding residues include histidine 248 and histidine 274. Residue histidine 322 is the Proton donor of the active site. Ni(2+) is bound at residue aspartate 362.

This sequence belongs to the metallo-dependent hydrolases superfamily. Urease alpha subunit family. As to quaternary structure, heterotrimer of UreA (gamma), UreB (beta) and UreC (alpha) subunits. Three heterotrimers associate to form the active enzyme. Requires Ni cation as cofactor. Post-translationally, carboxylation allows a single lysine to coordinate two nickel ions.

Its subcellular location is the cytoplasm. It catalyses the reaction urea + 2 H2O + H(+) = hydrogencarbonate + 2 NH4(+). It participates in nitrogen metabolism; urea degradation; CO(2) and NH(3) from urea (urease route): step 1/1. The chain is Urease subunit alpha from Cereibacter sphaeroides (strain ATCC 17025 / ATH 2.4.3) (Rhodobacter sphaeroides).